A 78-amino-acid polypeptide reads, in one-letter code: Large ribosomal subunit protein bL28 (78 aa).

Positions 1 to 20 (MSRVCQVTGKGPVTGNNISH) are disordered.

Belongs to the bacterial ribosomal protein bL28 family.

The chain is Large ribosomal subunit protein bL28 from Azotobacter vinelandii (strain DJ / ATCC BAA-1303).